Consider the following 405-residue polypeptide: Pleckstrin homology-like domain family A member 1 (405 aa).

Basic and acidic residues-rich tracts occupy residues 1-11 and 54-63; these read MRRTPAAERLS and RSPEDGREQP. Disordered regions lie at residues 1–67, 189–217, and 293–405; these read MRRT…AHGS, QLQQQQQQQQPGQGTAEPSQPSGPTVASL, and QQHL…SNSA. The region spanning 153 to 277 is the PH domain; the sequence is ALKEGVLEKR…AEITLQMVQY (125 aa). Residues 189–202 show a composition bias toward low complexity; the sequence is QLQQQQQQQQPGQG. The span at 204 to 213 shows a compositional bias: polar residues; it reads AEPSQPSGPT. Over residues 294–309 the composition is skewed to low complexity; that stretch reads QHLVQQQPPQTQQIQP. The 16 X 2 AA repeats of P-Q stretch occupies residues 309 to 344; that stretch reads PQPQPQIQPQPQPQIQPQPQPQPQPQPQPQPQPQPQ. Pro residues predominate over residues 310 to 342; the sequence is QPQPQIQPQPQPQIQPQPQPQPQPQPQPQPQPQ. Residues 350–376 are compositionally biased toward basic residues; the sequence is PHPHPHPYSHPHQHPHPHPHPHPHPHP. The tract at residues 354–377 is 11 X 2 AA repeats of P-H; the sequence is PHPYSHPHQHPHPHPHPHPHPHPH. A compositionally biased stretch (low complexity) spans 378 to 389; that stretch reads PYQLQHAHQPLH.

As to quaternary structure, interacts with RPL14, EIF3S7 and PABPC4. In terms of tissue distribution, widely expressed with very high levels in adult liver and high levels in adult lung. According to PubMed:10428057 expressed at low levels in liver. Expressed at increased levels in atherosclerotic lesions observed in hyperhomocysteinema.

Its subcellular location is the cytoplasm. The protein localises to the cytoplasmic vesicle. It is found in the nucleus. The protein resides in the nucleolus. Its function is as follows. Seems to be involved in regulation of apoptosis. May be involved in detachment-mediated programmed cell death. May mediate apoptosis during neuronal development. May be involved in regulation of anti-apoptotic effects of IGF1. Required for TCR-induced apoptosis and expression of TNFRSF6/FAS in a T-cell hybridoma cell line. May be involved in translational regulation. In Mus musculus (Mouse), this protein is Pleckstrin homology-like domain family A member 1 (Phlda1).